The chain runs to 449 residues: Na(+)/H(+) antiporter NhaA (449 aa).

The next 12 membrane-spanning stretches (helical) occupy residues 30-50 (IFLI…WAGA), 69-89 (FGLT…FLVA), 112-132 (LLAA…LNLG), 138-158 (GWGI…GLLG), 168-188 (FLIA…ALFY), 192-212 (LSWI…LMNW), 218-238 (LIWY…SGIH), 241-261 (IAGV…SKIL), 312-332 (SLVD…NAGV), 348-368 (LGIL…FTLI), 386-406 (IIGI…ITNL), and 419-439 (ISIL…LLLT).

It belongs to the NhaA Na(+)/H(+) (TC 2.A.33) antiporter family.

The protein resides in the cell inner membrane. It carries out the reaction Na(+)(in) + 2 H(+)(out) = Na(+)(out) + 2 H(+)(in). Its function is as follows. Na(+)/H(+) antiporter that extrudes sodium in exchange for external protons. The polypeptide is Na(+)/H(+) antiporter NhaA (Christiangramia forsetii (strain DSM 17595 / CGMCC 1.15422 / KT0803) (Gramella forsetii)).